The sequence spans 64 residues: Long neurotoxin MS5 (64 aa).

5 cysteine pairs are disulfide-bonded: cysteine 3–cysteine 24, cysteine 6–cysteine 11, cysteine 17–cysteine 41, cysteine 45–cysteine 57, and cysteine 58–cysteine 63.

Belongs to the three-finger toxin family. Ancestral subfamily. Expressed by the venom gland.

The protein resides in the secreted. Produces peripheral paralysis by blocking neuromuscular transmission at the postsynaptic site. Very weak inhibitor of the endogenous nicotinic acetylcholine receptors (nAChR) in the human rhabdomyosarcoma TE 671 cell line. This neurotoxin is lethal to zebrafish by injection at the back of the dorsolateral region, but is not toxic to mice by intraperitoneal injection. The protein is Long neurotoxin MS5 of Micrurus surinamensis (Surinam coral snake).